The chain runs to 365 residues: Homeobox protein knotted-1-like 7 (365 aa).

The segment covering 1 to 11 (MEELEGHRGEG) has biased composition (basic and acidic residues). The disordered stretch occupies residues 1–20 (MEELEGHRGEGRLPPPPPLL). An ELK domain is found at 227 to 247 (ALKRHLLRKYSGYLGGLRKEL). The segment at residues 248–311 (SKKRKKGKLP…NQRKRHWKPT (64 aa)) is a DNA-binding region (homeobox; TALE-type).

The protein belongs to the TALE/KNOX homeobox family.

It localises to the nucleus. Probable transcription factor that may be involved in shoot formation during embryogenesis. The chain is Homeobox protein knotted-1-like 7 (OSH3) from Oryza sativa subsp. japonica (Rice).